We begin with the raw amino-acid sequence, 480 residues long: Ribulose bisphosphate carboxylase large chain (480 aa).

The propeptide occupies methionine 1–serine 2. Position 3 is an N-acetylproline (proline 3). Lysine 14 carries the post-translational modification N6,N6,N6-trimethyllysine. Substrate-binding residues include asparagine 123 and threonine 173. The Proton acceptor role is filled by lysine 175. Residue lysine 177 participates in substrate binding. 3 residues coordinate Mg(2+): lysine 201, aspartate 203, and glutamate 204. The residue at position 201 (lysine 201) is an N6-carboxylysine. Catalysis depends on histidine 294, which acts as the Proton acceptor. Residues arginine 295, histidine 327, and serine 379 each contribute to the substrate site.

This sequence belongs to the RuBisCO large chain family. Type I subfamily. As to quaternary structure, heterohexadecamer of 8 large chains and 8 small chains; disulfide-linked. The disulfide link is formed within the large subunit homodimers. Requires Mg(2+) as cofactor. In terms of processing, the disulfide bond which can form in the large chain dimeric partners within the hexadecamer appears to be associated with oxidative stress and protein turnover.

It is found in the plastid. The protein resides in the chloroplast. The enzyme catalyses 2 (2R)-3-phosphoglycerate + 2 H(+) = D-ribulose 1,5-bisphosphate + CO2 + H2O. It catalyses the reaction D-ribulose 1,5-bisphosphate + O2 = 2-phosphoglycolate + (2R)-3-phosphoglycerate + 2 H(+). In terms of biological role, ruBisCO catalyzes two reactions: the carboxylation of D-ribulose 1,5-bisphosphate, the primary event in carbon dioxide fixation, as well as the oxidative fragmentation of the pentose substrate in the photorespiration process. Both reactions occur simultaneously and in competition at the same active site. The polypeptide is Ribulose bisphosphate carboxylase large chain (Gossypium barbadense (Sea Island cotton)).